We begin with the raw amino-acid sequence, 248 residues long: Probable transcriptional regulatory protein Dde_2325 (248 aa).

A compositionally biased stretch (basic residues) spans 1–15; the sequence is MAGHSKWKNIQHRKG. The interval 1–22 is disordered; that stretch reads MAGHSKWKNIQHRKGRQDAKKS.

It belongs to the TACO1 family.

It localises to the cytoplasm. The sequence is that of Probable transcriptional regulatory protein Dde_2325 from Oleidesulfovibrio alaskensis (strain ATCC BAA-1058 / DSM 17464 / G20) (Desulfovibrio alaskensis).